The primary structure comprises 350 residues: Probable nicotinate-nucleotide adenylyltransferase/Ap4A hydrolase (350 aa).

The naMN adenylyltransferase stretch occupies residues 1 to 187; that stretch reads MKQKIIIFGG…YINTNHLYLI (187 aa). The ap4A hydrolase stretch occupies residues 196 to 350; the sequence is DKRFQHCLRV…LKYVQNLVKD (155 aa). Residues 198-310 enclose the HD domain; sequence RFQHCLRVGK…VYLADKLEPN (113 aa). Residue H201 participates in ADP binding. 3 residues coordinate Fe cation: H201, H230, and D231. ADP is bound by residues 231–234, H261, 287–288, D305, and R311; these read DLAK and HT. D305 lines the Fe cation pocket.

In the N-terminal section; belongs to the NadD family. The protein in the C-terminal section; belongs to the Ap4A hydrolase YqeK family.

It carries out the reaction nicotinate beta-D-ribonucleotide + ATP + H(+) = deamido-NAD(+) + diphosphate. The enzyme catalyses P(1),P(4)-bis(5'-adenosyl) tetraphosphate + H2O = 2 ADP + 2 H(+). The protein operates within cofactor biosynthesis; NAD(+) biosynthesis; deamido-NAD(+) from nicotinate D-ribonucleotide: step 1/1. In terms of biological role, catalyzes the reversible adenylation of nicotinate mononucleotide (NaMN) to nicotinic acid adenine dinucleotide (NaAD). Hydrolyzes diadenosine 5',5'''-P1,P4-tetraphosphate (Ap4A) to yield ADP. The chain is Probable nicotinate-nucleotide adenylyltransferase/Ap4A hydrolase from Mycoplasma genitalium (strain ATCC 33530 / DSM 19775 / NCTC 10195 / G37) (Mycoplasmoides genitalium).